The chain runs to 65 residues: Toxin Co52 (65 aa).

The LCN-type CS-alpha/beta domain maps to 2–65 (EDGYLVDKTG…PTWPLPNKTC (64 aa)). 4 disulfide bridges follow: cysteine 12–cysteine 65, cysteine 16–cysteine 41, cysteine 25–cysteine 46, and cysteine 29–cysteine 48.

As to expression, expressed by the venom gland.

The protein localises to the secreted. Its function is as follows. Beta toxins bind voltage-independently at site-4 of sodium channels (Nav) and shift the voltage of activation toward more negative potentials thereby affecting sodium channel activation and promoting spontaneous and repetitive firing. Not toxic to mice, chicks, crickets or woodlice (at 5 ug). In Centruroides ornatus (Scorpion), this protein is Toxin Co52.